The chain runs to 344 residues: UDP-N-acetylenolpyruvoylglucosamine reductase (344 aa).

The 171-residue stretch at 15 to 185 (LPACANQIIE…ISVGLKLAKA (171 aa)) folds into the FAD-binding PCMH-type domain. R161 is an active-site residue. The active-site Proton donor is S231. Residue E327 is part of the active site.

It belongs to the MurB family. FAD serves as cofactor.

It is found in the cytoplasm. It catalyses the reaction UDP-N-acetyl-alpha-D-muramate + NADP(+) = UDP-N-acetyl-3-O-(1-carboxyvinyl)-alpha-D-glucosamine + NADPH + H(+). It functions in the pathway cell wall biogenesis; peptidoglycan biosynthesis. In terms of biological role, cell wall formation. This chain is UDP-N-acetylenolpyruvoylglucosamine reductase, found in Haemophilus ducreyi (strain 35000HP / ATCC 700724).